A 505-amino-acid chain; its full sequence is Keratin, type II cuticular Hb1 (505 aa).

Residues 1–106 (MTCGSGFGGR…PNAQCVKQEE (106 aa)) are head. An IF rod domain is found at 106-417 (EKEQIKSLNS…RLLEGEEQRL (312 aa)). The interval 107-141 (KEQIKSLNSRFAAFIDKVRFLEQQNKLLETKLQFY) is coil 1A. The linker 1 stretch occupies residues 142–151 (QNRECCQSNL). The segment at 152–252 (EPLFEGYIET…YEEEILILQS (101 aa)) is coil 1B. Lys212 is covalently cross-linked (Glycyl lysine isopeptide (Lys-Gly) (interchain with G-Cter in SUMO1)). The tract at residues 253–269 (HISDTSVVVKLDNSRDL) is linker 12. The interval 270–413 (NMDCIIAEIK…ATYRRLLEGE (144 aa)) is coil 2. Residues 414 to 505 (EQRLCEGIGA…GSCGSSCRKC (92 aa)) are tail.

This sequence belongs to the intermediate filament family. In terms of assembly, heterotetramer of two type I and two type II keratins. As to expression, abundantly expressed in the differentiating cortex of growing (anagen) hair. Expression is restricted to the keratinocytes of the hair cortex and is absent from inner root sheath and medulla. Expressed in malignant lymph node tissue in breast carcinoma tissue.

In Homo sapiens (Human), this protein is Keratin, type II cuticular Hb1 (KRT81).